A 680-amino-acid polypeptide reads, in one-letter code: Lipase 1 (680 aa).

Residues 1–34 form the signal peptide; the sequence is MKSQNKYSIRKFSVGASSILIATLLFLSGGQAQA. The propeptide occupies 35 to 290; it reads AEKQVNMGNS…AKAKGDQTNK (256 aa). 2 disordered regions span residues 39 to 58 and 82 to 260; these read VNMGNSQEDTVTAQSIGDQQ and KNLH…KNGL. Residues 40-58 are compositionally biased toward polar residues; it reads NMGNSQEDTVTAQSIGDQQ. Over residues 84–112 the composition is skewed to basic and acidic residues; sequence LHNDKTISEENHRKTDDLNKDQLKDDKKS. Composition is skewed to polar residues over residues 162-193 and 204-223; these read SQDLNANNNLPSQSRTKVSPSLNKSDQTSQRE and QPQQKNQANDKITDHNFNNE. The span at 224 to 234 shows a compositional bias: basic and acidic residues; the sequence is QEVKPQKDEKT. A compositionally biased stretch (polar residues) spans 235 to 246; it reads LSVSDLKNNQKS. Catalysis depends on S408, which acts as the Nucleophile. D600 serves as the catalytic Charge relay system. D638 serves as a coordination point for Ca(2+). H639 serves as the catalytic Charge relay system. Ca(2+)-binding residues include D641, D646, and D649.

Belongs to the AB hydrolase superfamily. Lipase family.

It is found in the secreted. It catalyses the reaction a triacylglycerol + H2O = a diacylglycerol + a fatty acid + H(+). This is Lipase 1 (lip1) from Staphylococcus aureus (strain MRSA252).